A 27-amino-acid chain; its full sequence is MTRCISKKMLLEVDALSLIYSPHLYMS.

This is an uncharacterized protein from Saccharomyces cerevisiae (strain ATCC 204508 / S288c) (Baker's yeast).